We begin with the raw amino-acid sequence, 293 residues long: Glycine--tRNA ligase alpha subunit (293 aa).

It belongs to the class-II aminoacyl-tRNA synthetase family. As to quaternary structure, tetramer of two alpha and two beta subunits.

It localises to the cytoplasm. It catalyses the reaction tRNA(Gly) + glycine + ATP = glycyl-tRNA(Gly) + AMP + diphosphate. This Sulfurimonas denitrificans (strain ATCC 33889 / DSM 1251) (Thiomicrospira denitrificans (strain ATCC 33889 / DSM 1251)) protein is Glycine--tRNA ligase alpha subunit.